Here is an 827-residue protein sequence, read N- to C-terminus: Probable beta-glucosidase H (827 aa).

D223 is an active-site residue. The PA14 domain maps to 387 to 546 (RLLTNAVMHF…DSAEMVRSAV (160 aa)). N-linked (GlcNAc...) asparagine glycosylation is found at N471, N594, N600, and N625.

The protein belongs to the glycosyl hydrolase 3 family.

It localises to the secreted. The enzyme catalyses Hydrolysis of terminal, non-reducing beta-D-glucosyl residues with release of beta-D-glucose.. It functions in the pathway glycan metabolism; cellulose degradation. Its function is as follows. Beta-glucosidases are one of a number of cellulolytic enzymes involved in the degradation of cellulosic biomass. Catalyzes the last step releasing glucose from the inhibitory cellobiose. The polypeptide is Probable beta-glucosidase H (bglH) (Aspergillus flavus (strain ATCC 200026 / FGSC A1120 / IAM 13836 / NRRL 3357 / JCM 12722 / SRRC 167)).